Consider the following 394-residue polypeptide: Chorismate synthase (394 aa).

The NADP(+) site is built by Arg-42 and Arg-48. FMN is bound by residues 137 to 139 (RAS), 258 to 259 (QA), Gly-302, 317 to 321 (KPIAT), and Arg-343.

This sequence belongs to the chorismate synthase family. In terms of assembly, homotetramer. FMNH2 is required as a cofactor.

The enzyme catalyses 5-O-(1-carboxyvinyl)-3-phosphoshikimate = chorismate + phosphate. The protein operates within metabolic intermediate biosynthesis; chorismate biosynthesis; chorismate from D-erythrose 4-phosphate and phosphoenolpyruvate: step 7/7. Functionally, catalyzes the anti-1,4-elimination of the C-3 phosphate and the C-6 proR hydrogen from 5-enolpyruvylshikimate-3-phosphate (EPSP) to yield chorismate, which is the branch point compound that serves as the starting substrate for the three terminal pathways of aromatic amino acid biosynthesis. This reaction introduces a second double bond into the aromatic ring system. The chain is Chorismate synthase from Streptomyces avermitilis (strain ATCC 31267 / DSM 46492 / JCM 5070 / NBRC 14893 / NCIMB 12804 / NRRL 8165 / MA-4680).